A 508-amino-acid polypeptide reads, in one-letter code: MISPGFSHFTELAQQGNFIPVYQEWVADLETPVSAWYKVCSSQPYNFLLESVEGGESIGRYSFLGCDPMWVLEARGDETTQVLRNGQTETFRGNPLDILSQCLESIRPVNLPQLPPGIGGLFGVWGYELIRWMEPRVPVYEPQPEDPPDGIWMQVDHLLIFDQVKRKIWAIAFADLRGENVDLETAYRNACQRVTKLVLQLQLPLPPEATALELLTKTQLEGKELNYSSNTEQEKFLEEVAIAKDYITAGDIFQVVLSQRLSTIYRDDPFKLYRSLRLINPSPYMAYYNFGHWQIIGSSPEVMVKADRQLDGKLMATVRPIAGTRPRGKTHPEDEQLAEELLNDPKEIAEHVMLVDLGRNDLGRVCVQGSVKVNELMVIERYSHVMHIVSNVVGELASDKTAWDLLKACFPAGTVSGAPKIRAMEIINELEPERRGPYSGVYGYYDFEGQLNTAIAIRTMVVQEQPDGAHRVSVQTGAGIVADSDPQKEYEETLNKARGLLEAIRALS.

L-tryptophan-binding positions include Ser51 and 283–285; that span reads PYM. 323–324 contributes to the chorismate binding site; the sequence is GT. Residue Glu350 participates in Mg(2+) binding. Chorismate is bound by residues Tyr438, Arg458, 477-479, and Gly479; that span reads GAG. Residue Glu492 participates in Mg(2+) binding.

Belongs to the anthranilate synthase component I family. As to quaternary structure, heterotetramer consisting of two non-identical subunits: a beta subunit (TrpG) and a large alpha subunit (TrpE). Mg(2+) is required as a cofactor.

It catalyses the reaction chorismate + L-glutamine = anthranilate + pyruvate + L-glutamate + H(+). The protein operates within amino-acid biosynthesis; L-tryptophan biosynthesis; L-tryptophan from chorismate: step 1/5. With respect to regulation, feedback inhibited by tryptophan. In terms of biological role, part of a heterotetrameric complex that catalyzes the two-step biosynthesis of anthranilate, an intermediate in the biosynthesis of L-tryptophan. In the first step, the glutamine-binding beta subunit (TrpG) of anthranilate synthase (AS) provides the glutamine amidotransferase activity which generates ammonia as a substrate that, along with chorismate, is used in the second step, catalyzed by the large alpha subunit of AS (TrpE) to produce anthranilate. In the absence of TrpG, TrpE can synthesize anthranilate directly from chorismate and high concentrations of ammonia. The chain is Anthranilate synthase component 1 (trpE) from Synechocystis sp. (strain ATCC 27184 / PCC 6803 / Kazusa).